The chain runs to 260 residues: uncharacterized protein (260 aa).

One can recognise an ABC transporter domain in the interval 4 to 231 (LHVDHVTHTY…PKELAAMLPF (228 aa)). ATP is bound at residue 40–47 (GPSGCGKT).

It belongs to the ABC transporter superfamily.

This is an uncharacterized protein from Bacillus subtilis (strain 168).